The following is a 1070-amino-acid chain: Regulator of Ty1 transposition protein 107 (1070 aa).

BRCT domains lie at 2-103 (STSL…QDSV), 117-213 (NPFH…LYHF), 260-352 (HPNK…FYMF), and 369-453 (PFHA…EQCY). Position 304 is a phosphoserine (Ser-304). At Thr-532 the chain carries Phosphothreonine. The disordered stretch occupies residues 572–659 (SRASFPVVDS…LQVQLGQRTK (88 aa)). A compositionally biased stretch (basic and acidic residues) spans 580–592 (DSKKSNLQKKDSN). Phosphoserine is present on residues Ser-591 and Ser-593. Composition is skewed to basic and acidic residues over residues 603–615 (CEGH…KEFT) and 622–645 (DAPK…KKEE). Ser-720 is modified (phosphoserine). Residues 722-731 (NDDHINDEKP) are compositionally biased toward basic and acidic residues. The segment at 722-753 (NDDHINDEKPAVNSKYTTPKTSQNITSGVDTP) is disordered. The span at 735 to 753 (SKYTTPKTSQNITSGVDTP) shows a compositional bias: polar residues. A phosphoserine mark is found at Ser-800 and Ser-806. 2 BRCT domains span residues 829 to 910 (FNEL…IDLL) and 934 to 1049 (GINE…CVES).

As to quaternary structure, forms a complex with the cullin-RING ligase (CRL) RTT101(MMS1-MMS22). Interacts with MMS22 and RTT101. Interacts with histone H2A; requires H2A to be phosphorylated (gamma-H2A). Interacts with RAD55. In terms of processing, phosphorylated by MEC1.

It is found in the nucleus. In terms of biological role, required for resumption of chromosome replication after DNA damage, specifically in S phase. Is recruited to chromatin in the presence of RTT109 and RTT101 in response to stalled replication forks and acts as a scaffold during DNA repair. This chain is Regulator of Ty1 transposition protein 107 (RTT107), found in Saccharomyces cerevisiae (strain ATCC 204508 / S288c) (Baker's yeast).